The following is a 232-amino-acid chain: 6-phosphogluconolactonase (232 aa).

The protein belongs to the glucosamine/galactosamine-6-phosphate isomerase family. 6-phosphogluconolactonase subfamily.

The enzyme catalyses 6-phospho-D-glucono-1,5-lactone + H2O = 6-phospho-D-gluconate + H(+). Its pathway is carbohydrate degradation; pentose phosphate pathway; D-ribulose 5-phosphate from D-glucose 6-phosphate (oxidative stage): step 2/3. Its function is as follows. Hydrolysis of 6-phosphogluconolactone to 6-phosphogluconate. The sequence is that of 6-phosphogluconolactonase (pgl) from Caulobacter vibrioides (strain ATCC 19089 / CIP 103742 / CB 15) (Caulobacter crescentus).